The sequence spans 845 residues: Beta-mannosidase B (845 aa).

The interval 1-20 (MSKLQQFPLSKGWSFRDSED) is disordered. Asparagine 252 carries N-linked (GlcNAc...) asparagine glycosylation. Catalysis depends on glutamate 432, which acts as the Proton donor. N-linked (GlcNAc...) asparagine glycans are attached at residues asparagine 717 and asparagine 723.

Belongs to the glycosyl hydrolase 2 family. Beta-mannosidase B subfamily.

The enzyme catalyses Hydrolysis of terminal, non-reducing beta-D-mannose residues in beta-D-mannosides.. The protein operates within glycan metabolism; N-glycan degradation. In terms of biological role, exoglycosidase that cleaves the single beta-linked mannose residue from the non-reducing end of beta-mannosidic oligosaccharides of various complexity and length. Prefers mannobiose over mannotriose and has no activity against polymeric mannan. Is also severely restricted by galactosyl substitutions at the +1 subsite. This is Beta-mannosidase B (mndB) from Neosartorya fischeri (strain ATCC 1020 / DSM 3700 / CBS 544.65 / FGSC A1164 / JCM 1740 / NRRL 181 / WB 181) (Aspergillus fischerianus).